Reading from the N-terminus, the 234-residue chain is Iron-sulfur cluster co-chaperone protein HscB (234 aa).

A divalent metal cation contacts are provided by Cys40, Cys43, Cys57, and Cys60. Residues 71 to 143 (DYFSLMNCNR…LTRGLYLLKL (73 aa)) form the J domain.

The protein belongs to the HscB family. As to quaternary structure, interacts with ISCU and HSPA9 to form an iron-sulfur transfer complex. Interacts with SDHAF1 (via the first LYR motif); the interaction recruits the iron-sulfur transfer complex composed of HSC20, HSPA9 and ISCU and mediates the incorporation of iron-sulfur clusters into SDHB which also interacts with HSC20. Interacts with the cytoplasmic form of ISCU and with CIA complex member CIAO1 (via LYR motif). In terms of assembly, homodimer. Interacts with ISCU (cytoplasmic form); this interaction stabilizes the (Fe-S) clusters on ISCU. Interacts with the CIA complex member CIAO1 (via LYR motif).

Its subcellular location is the cytoplasm. It is found in the mitochondrion. It participates in cofactor biosynthesis; iron-sulfur cluster biosynthesis. Its function is as follows. Acts as a co-chaperone in iron-sulfur cluster assembly in mitochondria. Required for incorporation of iron-sulfur clusters into SDHB, the iron-sulfur protein subunit of succinate dehydrogenase that is involved in complex II of the mitochondrial electron transport chain. Recruited to SDHB by interaction with SDHAF1 which first binds SDHB and then recruits the iron-sulfur transfer complex formed by HSC20, HSPA9 and ISCU through direct binding to HSC20. Plays an essential role in hematopoiesis. Functionally, acts as a co-chaperone in iron-sulfur cluster assembly in the cytoplasm. Also mediates complex formation between components of the cytosolic iron-sulfur biogenesis pathway and the CIA targeting complex composed of CIAO1, DIPK1B/FAM69B and MMS19 by binding directly to the scaffold protein ISCU and to CIAO1. This facilitates iron-sulfur cluster insertion into a number of cytoplasmic and nuclear proteins including POLD1, ELP3, DPYD and PPAT. In Mus musculus (Mouse), this protein is Iron-sulfur cluster co-chaperone protein HscB.